We begin with the raw amino-acid sequence, 242 residues long: Zinc import ATP-binding protein ZnuC (242 aa).

The ABC transporter domain maps to 24–241; it reads INVKNLSFFY…EKFLKMFSSY (218 aa). Position 56 to 63 (56 to 63) interacts with ATP; the sequence is GPNGGGKT.

It belongs to the ABC transporter superfamily. Zinc importer (TC 3.A.1.15.5) family. In terms of assembly, the complex is composed of two ATP-binding proteins (ZnuC), two transmembrane proteins (ZnuB) and a solute-binding protein (ZnuA).

It localises to the cell inner membrane. It carries out the reaction Zn(2+)(out) + ATP(in) + H2O(in) = Zn(2+)(in) + ADP(in) + phosphate(in) + H(+)(in). In terms of biological role, part of the ABC transporter complex ZnuABC involved in zinc import. Responsible for energy coupling to the transport system. In Ehrlichia canis (strain Jake), this protein is Zinc import ATP-binding protein ZnuC.